Here is a 79-residue protein sequence, read N- to C-terminus: Sec-independent protein translocase protein TatA (79 aa).

Residues 1 to 21 form a helical membrane-spanning segment; sequence MGGWSSPSHWLIILLIVVLLF. Residues 52 to 61 are compositionally biased toward basic and acidic residues; that stretch reads KNTQKIEENK. The interval 52–79 is disordered; sequence KNTQKIEENKNTTNNTSADASIDKTKKA.

It belongs to the TatA/E family. The Tat system comprises two distinct complexes: a TatABC complex, containing multiple copies of TatA, TatB and TatC subunits, and a separate TatA complex, containing only TatA subunits. Substrates initially bind to the TatABC complex, which probably triggers association of the separate TatA complex to form the active translocon.

Its subcellular location is the cell inner membrane. Its function is as follows. Part of the twin-arginine translocation (Tat) system that transports large folded proteins containing a characteristic twin-arginine motif in their signal peptide across membranes. TatA could form the protein-conducting channel of the Tat system. This is Sec-independent protein translocase protein TatA from Campylobacter jejuni subsp. jejuni serotype O:6 (strain 81116 / NCTC 11828).